Reading from the N-terminus, the 60-residue chain is Large ribosomal subunit protein bL32 (60 aa).

The protein belongs to the bacterial ribosomal protein bL32 family.

The chain is Large ribosomal subunit protein bL32 from Paramagnetospirillum magneticum (strain ATCC 700264 / AMB-1) (Magnetospirillum magneticum).